The chain runs to 220 residues: Translin-1 (220 aa).

The protein belongs to the translin family. In terms of assembly, forms an octameric ring-shaped structure, which is capable of binding DNA or RNA.

The protein localises to the cytoplasm. The protein resides in the nucleus. Its function is as follows. DNA-binding protein that specifically recognizes consensus sequences at the breakpoint junctions in chromosomal translocations. Selectively binds single-stranded d(GT)n and d(GTT)n microsatellite repeats. Has much higher affinities for the homologous RNA sequences (GU)n and (GUU)n. Does not bind double-stranded DNA. Has a role in meiosis. The sequence is that of Translin-1 (tsn1) from Schizosaccharomyces pombe (strain 972 / ATCC 24843) (Fission yeast).